The following is a 484-amino-acid chain: Probable D-lactate dehydrogenase, mitochondrial (484 aa).

The transit peptide at 1–52 (MAMLLRVATQRLSPWRSFCSRGSQGGLSQDFVEALKAVVGSPHVSTASAVRE) directs the protein to the mitochondrion. Lysine 36 bears the N6-acetyllysine mark. The 181-residue stretch at 62 to 242 (RCQPPDAVVW…TSTTLRLHPA (181 aa)) folds into the FAD-binding PCMH-type domain. Lysine 292 bears the N6-acetyllysine mark. At lysine 335 the chain carries N6-acetyllysine; alternate. Lysine 335 bears the N6-succinyllysine; alternate mark. Residues lysine 422 and lysine 449 each carry the N6-acetyllysine modification.

Belongs to the FAD-binding oxidoreductase/transferase type 4 family. In terms of assembly, interacts with CSRP3. The cofactor is FAD. In terms of tissue distribution, readily detected in liver and kidney, with a weaker signal observed in heart, skeletal muscle, stomach, brain, and lung.

The protein resides in the mitochondrion. It catalyses the reaction (R)-lactate + 2 Fe(III)-[cytochrome c] = 2 Fe(II)-[cytochrome c] + pyruvate + 2 H(+). In terms of biological role, involved in D-lactate, but not L-lactate catabolic process. This Mus musculus (Mouse) protein is Probable D-lactate dehydrogenase, mitochondrial.